The sequence spans 610 residues: Threonine--tRNA ligase (610 aa).

The segment at 1–29 (MANHDQQTVSSAAATTSASPSPVVLPKTS) is disordered. Residues 8-24 (TVSSAAATTSASPSPVV) show a composition bias toward low complexity. The tract at residues 209-502 (DHRRIGKDLD…MTENYAGDYP (294 aa)) is catalytic. Residues Cys302, His353, and His479 each contribute to the Zn(2+) site.

The protein belongs to the class-II aminoacyl-tRNA synthetase family. In terms of assembly, homodimer. It depends on Zn(2+) as a cofactor.

It localises to the cytoplasm. The enzyme catalyses tRNA(Thr) + L-threonine + ATP = L-threonyl-tRNA(Thr) + AMP + diphosphate + H(+). Its function is as follows. Catalyzes the attachment of threonine to tRNA(Thr) in a two-step reaction: L-threonine is first activated by ATP to form Thr-AMP and then transferred to the acceptor end of tRNA(Thr). Also edits incorrectly charged L-seryl-tRNA(Thr). This Synechococcus sp. (strain WH7803) protein is Threonine--tRNA ligase.